A 408-amino-acid chain; its full sequence is Peptidase T (408 aa).

A Zn(2+)-binding site is contributed by His78. Asp80 is an active-site residue. Asp141 lines the Zn(2+) pocket. Catalysis depends on Glu175, which acts as the Proton acceptor. Zn(2+) contacts are provided by Glu176, Asp198, and His380.

This sequence belongs to the peptidase M20B family. Requires Zn(2+) as cofactor.

It is found in the cytoplasm. The enzyme catalyses Release of the N-terminal residue from a tripeptide.. Functionally, cleaves the N-terminal amino acid of tripeptides. This is Peptidase T from Halothermothrix orenii (strain H 168 / OCM 544 / DSM 9562).